We begin with the raw amino-acid sequence, 276 residues long: ADP-dependent (S)-NAD(P)H-hydrate dehydratase (276 aa).

The YjeF C-terminal domain maps to 7-274 (METLNSINIP…NEIPYAMKQL (268 aa)). 3 residues coordinate (6S)-NADPHX: A42, G105, and H154. G216 contributes to the AMP binding site. D217 lines the (6S)-NADPHX pocket.

It belongs to the NnrD/CARKD family. Homotetramer. Mg(2+) serves as cofactor.

It carries out the reaction (6S)-NADHX + ADP = AMP + phosphate + NADH + H(+). It catalyses the reaction (6S)-NADPHX + ADP = AMP + phosphate + NADPH + H(+). Its function is as follows. Catalyzes the dehydration of the S-form of NAD(P)HX at the expense of ADP, which is converted to AMP. Together with NAD(P)HX epimerase, which catalyzes the epimerization of the S- and R-forms, the enzyme allows the repair of both epimers of NAD(P)HX, a damaged form of NAD(P)H that is a result of enzymatic or heat-dependent hydration. In Staphylococcus aureus (strain NCTC 8325 / PS 47), this protein is ADP-dependent (S)-NAD(P)H-hydrate dehydratase.